Here is a 211-residue protein sequence, read N- to C-terminus: Holliday junction resolvase RecU (211 aa).

The Mg(2+) site is built by Thr-87, Asp-89, Asp-102, and Gln-121.

Belongs to the RecU family. The cofactor is Mg(2+).

The protein localises to the cytoplasm. It carries out the reaction Endonucleolytic cleavage at a junction such as a reciprocal single-stranded crossover between two homologous DNA duplexes (Holliday junction).. Endonuclease that resolves Holliday junction intermediates in genetic recombination. Cleaves mobile four-strand junctions by introducing symmetrical nicks in paired strands. Promotes annealing of linear ssDNA with homologous dsDNA. Required for DNA repair, homologous recombination and chromosome segregation. This Limosilactobacillus fermentum (strain NBRC 3956 / LMG 18251) (Lactobacillus fermentum) protein is Holliday junction resolvase RecU.